A 181-amino-acid chain; its full sequence is NADH-quinone oxidoreductase subunit I (181 aa).

4Fe-4S ferredoxin-type domains lie at 52–81 (TRDS…LKKS) and 91–120 (EFFR…LISD). Positions 61, 64, 67, 71, 100, 103, 106, and 110 each coordinate [4Fe-4S] cluster.

It belongs to the complex I 23 kDa subunit family. In terms of assembly, NDH-1 is composed of 13 different subunits. Subunits NuoA, H, J, K, L, M, N constitute the membrane sector of the complex. It depends on [4Fe-4S] cluster as a cofactor.

The protein localises to the cell inner membrane. The catalysed reaction is a quinone + NADH + 5 H(+)(in) = a quinol + NAD(+) + 4 H(+)(out). Its function is as follows. NDH-1 shuttles electrons from NADH, via FMN and iron-sulfur (Fe-S) centers, to quinones in the respiratory chain. The immediate electron acceptor for the enzyme in this species is believed to be ubiquinone. Couples the redox reaction to proton translocation (for every two electrons transferred, four hydrogen ions are translocated across the cytoplasmic membrane), and thus conserves the redox energy in a proton gradient. This chain is NADH-quinone oxidoreductase subunit I, found in Blochmanniella floridana.